The chain runs to 293 residues: Protease HtpX homolog (293 aa).

Transmembrane regions (helical) follow at residues 4 to 24 (IFLFVATNIAVIAVMSIVLSL) and 39 to 59 (PMLLVFSLVVGFTGAIISLLI). His144 is a binding site for Zn(2+). The active site involves Glu145. Residue His148 participates in Zn(2+) binding. The next 2 membrane-spanning stretches (helical) occupy residues 159–179 (LVQGVVNTFVVFLARVVGYFV) and 200–220 (ITVLVCQVVFGIAASVIVAWF). Residue Glu225 coordinates Zn(2+).

The protein belongs to the peptidase M48B family. Zn(2+) serves as cofactor.

Its subcellular location is the cell inner membrane. This is Protease HtpX homolog from Herminiimonas arsenicoxydans.